The following is a 92-amino-acid chain: Large ribosomal subunit protein bL28 (92 aa).

The protein belongs to the bacterial ribosomal protein bL28 family.

In Borrelia duttonii (strain Ly), this protein is Large ribosomal subunit protein bL28.